Consider the following 954-residue polypeptide: Glycine dehydrogenase (decarboxylating) (954 aa).

Over residues 1–13 (MTELLQSLSTQNE) the composition is skewed to polar residues. The tract at residues 1-24 (MTELLQSLSTQNEFVARHNGPNKS) is disordered. K704 carries the N6-(pyridoxal phosphate)lysine modification.

This sequence belongs to the GcvP family. As to quaternary structure, the glycine cleavage system is composed of four proteins: P, T, L and H. Pyridoxal 5'-phosphate serves as cofactor.

It carries out the reaction N(6)-[(R)-lipoyl]-L-lysyl-[glycine-cleavage complex H protein] + glycine + H(+) = N(6)-[(R)-S(8)-aminomethyldihydrolipoyl]-L-lysyl-[glycine-cleavage complex H protein] + CO2. Its function is as follows. The glycine cleavage system catalyzes the degradation of glycine. The P protein binds the alpha-amino group of glycine through its pyridoxal phosphate cofactor; CO(2) is released and the remaining methylamine moiety is then transferred to the lipoamide cofactor of the H protein. The polypeptide is Glycine dehydrogenase (decarboxylating) (Vibrio campbellii (strain ATCC BAA-1116)).